The following is a 161-amino-acid chain: MQDAITSVINSSDVQGKYLDTAALEKLKGYFATGELRVRAATTISANAAAIVKEAVAKSLLYSDITRPGGNMYTTRRYAACIRDLDYYLRYSTYAMLAGDPSILDERVLNGLKETYNSLGVPVGATVQAIQAMKEVTASLVGPDAGKEMGVYFDYISSGLS.

Asn-71 carries the N4-methylasparagine modification. Cys-81 lines the (2R,3E)-phycocyanobilin pocket.

The protein belongs to the phycobiliprotein family. Heterodimer of an alpha and a beta chain. Contains one covalently linked phycocyanobilin chromophore.

It is found in the cellular thylakoid membrane. Light-harvesting photosynthetic bile pigment-protein from the phycobiliprotein complex. Allophycocyanin has a maximum absorption at approximately 650 nanometers. In Anabaena cylindrica, this protein is Allophycocyanin beta chain (apcB).